The sequence spans 273 residues: Ribosomal RNA small subunit methyltransferase A (273 aa).

S-adenosyl-L-methionine-binding residues include N18, L20, G45, E66, D91, and N113.

The protein belongs to the class I-like SAM-binding methyltransferase superfamily. rRNA adenine N(6)-methyltransferase family. RsmA subfamily.

The protein localises to the cytoplasm. It catalyses the reaction adenosine(1518)/adenosine(1519) in 16S rRNA + 4 S-adenosyl-L-methionine = N(6)-dimethyladenosine(1518)/N(6)-dimethyladenosine(1519) in 16S rRNA + 4 S-adenosyl-L-homocysteine + 4 H(+). Specifically dimethylates two adjacent adenosines (A1518 and A1519) in the loop of a conserved hairpin near the 3'-end of 16S rRNA in the 30S particle. May play a critical role in biogenesis of 30S subunits. The polypeptide is Ribosomal RNA small subunit methyltransferase A (Shigella boydii serotype 4 (strain Sb227)).